Consider the following 134-residue polypeptide: Ion transport peptide-like (134 aa).

3 disulfides stabilise this stretch: C62–C98, C78–C94, and C81–C107.

Belongs to the arthropod CHH/MIH/GIH/VIH hormone family.

The protein resides in the secreted. This is Ion transport peptide-like from Schistocerca gregaria (Desert locust).